Here is a 1510-residue protein sequence, read N- to C-terminus: Chromosome partition protein MukB (1510 aa).

A coiled-coil region spans residues 6 to 30 (ELENEIELESDEVIMENENVEEIVD). Position 75 to 82 (75 to 82 (GGNGAGKS)) interacts with ATP. Coiled-coil stretches lie at residues 346–506 (QHRL…HKMS), 553–611 (QQTP…EDIS), 673–706 (MQSQ…RLSQ), 821–846 (SAAR…AQIA), 876–1064 (EALM…IQLQ), 1094–1149 (ERAR…RELV), and 1249–1304 (DAIE…LQNI). Positions 707–824 (PDGSEDPRLN…EIPLFGSAAR (118 aa)) are flexible hinge.

Belongs to the SMC family. MukB subfamily. In terms of assembly, homodimerization via its hinge domain. Binds to DNA via its C-terminal region. Interacts, and probably forms a ternary complex, with MukE and MukF via its C-terminal region. The complex formation is stimulated by calcium or magnesium. Interacts with tubulin-related protein FtsZ.

The protein resides in the cytoplasm. Its subcellular location is the nucleoid. Functionally, plays a central role in chromosome condensation, segregation and cell cycle progression. Functions as a homodimer, which is essential for chromosome partition. Involved in negative DNA supercoiling in vivo, and by this means organize and compact chromosomes. May achieve or facilitate chromosome segregation by condensation DNA from both sides of a centrally located replisome during cell division. The sequence is that of Chromosome partition protein MukB from Haemophilus influenzae (strain PittGG).